The sequence spans 306 residues: Probable cobalamin biosynthesis protein CobD (306 aa).

The next 5 membrane-spanning stretches (helical) occupy residues Leu54–Ile74, Ile88–Ser108, Ile155–Phe175, Ile207–Tyr227, and Ser286–Met306.

This sequence belongs to the CobD/CbiB family.

It is found in the cell membrane. Its pathway is cofactor biosynthesis; adenosylcobalamin biosynthesis. In terms of biological role, converts cobyric acid to cobinamide by the addition of aminopropanol on the F carboxylic group. This is Probable cobalamin biosynthesis protein CobD from Methanococcus maripaludis (strain DSM 14266 / JCM 13030 / NBRC 101832 / S2 / LL).